The chain runs to 299 residues: Bifunctional protein FolD (299 aa).

NADP(+)-binding positions include 168 to 170, Ser-193, and Ile-234; that span reads GRS.

The protein belongs to the tetrahydrofolate dehydrogenase/cyclohydrolase family. In terms of assembly, homodimer.

The catalysed reaction is (6R)-5,10-methylene-5,6,7,8-tetrahydrofolate + NADP(+) = (6R)-5,10-methenyltetrahydrofolate + NADPH. It catalyses the reaction (6R)-5,10-methenyltetrahydrofolate + H2O = (6R)-10-formyltetrahydrofolate + H(+). The protein operates within one-carbon metabolism; tetrahydrofolate interconversion. Functionally, catalyzes the oxidation of 5,10-methylenetetrahydrofolate to 5,10-methenyltetrahydrofolate and then the hydrolysis of 5,10-methenyltetrahydrofolate to 10-formyltetrahydrofolate. The protein is Bifunctional protein FolD of Rhizobium johnstonii (strain DSM 114642 / LMG 32736 / 3841) (Rhizobium leguminosarum bv. viciae).